A 376-amino-acid chain; its full sequence is Succinyl-diaminopimelate desuccinylase (376 aa).

H67 serves as a coordination point for Zn(2+). The active site involves D69. D100 lines the Zn(2+) pocket. The active-site Proton acceptor is the E134. The Zn(2+) site is built by E135, E163, and H349.

The protein belongs to the peptidase M20A family. DapE subfamily. Homodimer. Zn(2+) serves as cofactor. Requires Co(2+) as cofactor.

It catalyses the reaction N-succinyl-(2S,6S)-2,6-diaminopimelate + H2O = (2S,6S)-2,6-diaminopimelate + succinate. It participates in amino-acid biosynthesis; L-lysine biosynthesis via DAP pathway; LL-2,6-diaminopimelate from (S)-tetrahydrodipicolinate (succinylase route): step 3/3. In terms of biological role, catalyzes the hydrolysis of N-succinyl-L,L-diaminopimelic acid (SDAP), forming succinate and LL-2,6-diaminopimelate (DAP), an intermediate involved in the bacterial biosynthesis of lysine and meso-diaminopimelic acid, an essential component of bacterial cell walls. The chain is Succinyl-diaminopimelate desuccinylase from Xanthomonas campestris pv. campestris (strain B100).